Consider the following 207-residue polypeptide: Dephospho-CoA kinase (207 aa).

The 198-residue stretch at 10–207 (ILGLTGGIGS…FYLTLRGGQS (198 aa)) folds into the DPCK domain. 18–23 (GSGKSA) is a binding site for ATP.

Belongs to the CoaE family.

The protein localises to the cytoplasm. It carries out the reaction 3'-dephospho-CoA + ATP = ADP + CoA + H(+). Its pathway is cofactor biosynthesis; coenzyme A biosynthesis; CoA from (R)-pantothenate: step 5/5. In terms of biological role, catalyzes the phosphorylation of the 3'-hydroxyl group of dephosphocoenzyme A to form coenzyme A. This Pseudomonas syringae pv. tomato (strain ATCC BAA-871 / DC3000) protein is Dephospho-CoA kinase.